The primary structure comprises 5628 residues: MGIEQLNTTRAQHDDIAVIGIACRFPGASDYRQFWDNLCERRVSIGEIPGERWDWRAYWGDPQQDANACNSRWGGFVDEVGAFDLGFFGMSAREVDKMDPQQRLALELAWHCFEDAGLRPSAVAKRDVGVFVGIANLDYKEIVEAHASEIDAYYASGVAASVASNRLSYWFDLRGPSVTVDTACSGSLYALHLAREALRRGECEMALAGGVSLLLTPRRYLGFARARMLSPTGAIRAFDDAADGMVRGEGGGLVLLKPLSRALDDGDRIFGVLAGSAVNHSGRTYSLTYPDADAQARVIRAAFDAAGVSPAQVSYVEAHGTGTPKGDPIELEGLLRVFGAQPRDALAPRCAIGSVKANIGHLESAAGIAGVIKTLLALHHGMLPPMPHFAALNHRVDAARFAAAGLAVADALAPWEAGASADGASAARIAGVSAFGFAGTNAHVVLREAPAAARAAVAAGRADGAGVLCLSAKTDAALERVRAGFVEWLARDGARHAFADICAALVSRREHFASRIAVAACDVDGALAALRARADTASSVYRAGRVALDDDGNLVDASGPHDEQADHDGSGEHGEHGERARAGADDLSRARRRASRYVRGASPDAWGPSDGPTPHVPLPDYPFERTVCWTGPRPSRAVAGPARGPAVDEAVDEAVDEAGAADGDVFVLEPRWHLAPAADARPAPARPEDAAVVVCVVADAAQRAAVERALARIATAPACMFVEPDATMGEPARAVDALVRTLDGIADRARADVSGVDTSGAAAPISVWYCADLARDARAPIDVRAYDRLLTLLQALAKTRAPLRRVLLAGVSESLAADAWPALVTVLAPRRPALAVTPVLFDHGTPEALWVSALLQEARAAGGAAVRYAAGERSVAVLARAANAASENAARLAGGAPLRTGGCYLLTGGLGGLGRLFAVRLMRRYGARVVALGRSAHDAGVQASVAALCAEAGAGTLRYLQADVCDAAAMAAVLDDIGRHEGRLNGVIHAAGCEDRASLADKSLDDVHAVLAPKLAAATVLDRLTAGLPLDFVCLFSSLAGIVGDFGCGAYALGNRLLMSYAQRADGRVDAHGRRRRVVAIAWPLWRDGAMGFDDPVKRDRYLAASGQRMLDADEGFAWFERLLASPSAAPVVLAGERARIVSWLGSIDGAPVADASPGAASSGAAAPNAASDASRDTERAEATDAAAPIVAAGAPAHAHASAPRERDAHGSARLPALRGIAARVLGADAALLDEQASFADLGFDSIGLMDFARAVGEAFGIDMSPAMLFSHVTLKRLAGHLATRLDDAPRAVAGARSGAAHASAGRACAAAGRADGARASRIDVRPPEAGAGERAADARPPLTAPEIAPEIAPESASGFASAPHPAPIPPAYEPIAIVGMSGRFPDARDIDAFWSLLMSGRGAARRVDPHDRFAAPRDEAAAWLAPVPGIDEFDPLFFDIAPAEAQRMDPRERLLLQHAWLALEDAGIGARALADHALGMFVGAEAGEYGGLSREPRSIVSDHNGVLAARLSYFLDLTGPNLSVNTACSSGLVALHLAIRSLHARECGIALAAGVNLMLSAELHDKMARAGMLSQHGVCRALDRDADGFVPGEAVVVVALKRLADALADGDAIHGVIRASGVNYDGRTNGMTAPSGLAQARLLTDAWRTAGIDPAELGYVVAHGTGTRLGDPVELNALGDALRASTGRRHFCAVTSNKPNVGHTLAASGLVSLVNLVEALRRAVIPPSAHWREGNEFVAWGDSPLRVNTVASAWPDGARRLGGASAFGMSGTNAHVIVEAAEPARARAPHAPRGGVLFVVSAKTGDALAQRLRDLADCLASDAWSDGDLADVAHTLLHGRQHFEHRSAVFARGKADAIDALRAAADAVRNAPARRTGALRLLDDYAAHLSARYAAWRDAPARDVDEARRLLEAIGDAYREGATPSALVVAPAPGRTVRLPGYPFACERHWHPAPARAGGASAGANAREPGARERAEAAAAPHVVVLTLTGSEPYLRDHLIDGQRVLPGAAHLDMARAAFERVRAAGGRAARFVALRDVVWRAPLVAGDAGAEVHVELTPSGTAFAYRILSRPADRAAAVGAALTLHSEGVVDELNEPAPEPLDLDGWRAACAGERVDGAALHARFASLGIGYGPSHRGVAHVRLGEHAALARLDLGALADADFDGFGLHPGIVDSAFQASAALSAPREDAAVPFMLRALHVYSRAARTMWAAIRVAAPAGGGAGGVDTRPIDIDLVHDDGAICASLRGWVSARWRKLAGAPPAARATAALRGWRWRAAEPDPRAAEAATRVVLLAPDFGALAAELAAHDAVRCEMLDDVSSHALPDAFAARATQAFAAVRRELAAKPGRPVLFQAVCREADSATAWGLAGLFKTAADENPLASGHVVLVSESFDRARLAAALLAERAWTGHLRYGGAGREAFAIDADEDDRDGREPAGGPPLRDDGVYAISGGAGGIGRAIARDIVARTRAARVYLLGRSAHAPSDLFATADERARIRYCRVDVADREQVHAWIAGLKRDGEALRGVVHAAGVVDDAFVVAKEPSRVHAVLRPKVAGAVWLDEATRDAPLDFFVAFSSLASAFGNAGQADYAMANAFVDGYMTERRARVAGGVSRGASLSIQWPLWADAGMRMPAAIASRLAAATGLAPLPSAEGIAAWRAALARDDANVAVLYGERAAIAAWLATSDAMPPRARAARPMPAARVDLHALRALAASLIGVDAHDINVDADIDEYGLDAVALAHLAREIGERAGRADVGLGFVRGERTLRAIARALDASAPGGDAEVDIGADADADADNAPDAEACVECAGIDARATPPDAGAPQRGAHAAAAEGSARDEAARSIAPLAGAGSPDGASALRARVGARLSALLADVLKVPVARLEPDAPFERYGIDSLTVVALNESLGRHVDALPKTLFFEYRTLAELTDYFVRRHAGAAWFAPDARAEHGAAGALATLGAATRATQTEQAEQSRVAPLAPPRRVFAAATAATRSRAASAPPAATADAIAVIGLAGRYPQARDLDAFWRNLRDGRDCITEIPAERWNHGDFFDPQKGVAGKTYSKWGGFIEGVDEFDAAFFNIAPRDAERMDPQERLFLQASYQAIEDAGYARASLGAGRVGVFAGVMYSEYQLYGIEESAAGRPAALSGSAASIANRVSYHLDLHGPSMAVDTMCSSSLTALHLACRSLQRGECELALAGGVNVSVHPNKYLMLADNRFVSSAGRCESFGAGGDGYVPAEGVGVAVLKPLRAAIADGDAIHGVICATALNHGGKNNGYTVPNPAWQAAVIEAALGEAGVAPGDVSYVEAHGTGTTLGDPIEIAGLARAFGEPGARRGAPCAIGSVKSNIGHAESAAGIAGLTKVLLQMRHRMLVPSLHADTLNPNIAFETTPFCVQRALERWERPGDGERVAGVSSFGAGGANAHVIVREYRSDDERDGRDEPASTAPARARPAWIVLSARNEDGLRARAAQLRELAAGCEGDADLHAIAYTLQTGRDAMDERLAFEATSIADLIASLDAFARGEPGKKQLRGNGRARRGDAPPAGVADARLARGEHRAALDDWVRGASIDWRRAYGPGAPFGPAPRRMHLPVYPFARTRHWLPAPLDARRRAARAGGGLHPMLDANRSEFGRQRFVVEFDGREPWLADHRVDGRRVLPGVAYLEMARAALAASAPDMHADGGATLEDVRWLRPCIVPDGGATLEIALERDGDGIAFSISQTSAHAQPALCCTGRSPSRAARGGGERIDVDAMRDAFRAAPAFDADACYRAFARRGVQYGPSHRTIERVWADGDRALARLRSARPADPRLVMWPGLLDGALQSLIGLHGLDGDLLAAPYRLARLDVHGACGPAMWALARRAGDGALDLVLCDDAGEACVTMRGFASRAAASWRTAAQAAGAPHEAVAGGDARAAFGPAAESPSAATSTSAATSPAISTSAATPAAADGDDWLLLPRWLACDLDPERDAGARAVAPRSVLAIADDACVHDLSAAAFGGASVRRMPASDAADAARLAAILGDAPRLDALVFVAPGAHARSAQALIDAQESGAIALFRIVKALLAHGYRDDALTLAIVTEQAVALYPGEPIDPAHAALHGMAGVLGRDLPRWRVLCADVERARAYAGAALVAQAGPAGEGPRINRLGRWHRRALARVDAPAARESAFRRGGVYVIVGGAGGLGRVLTEHLIRRADARVVWVGRRAADGRIAADCASFESIGAPPLYLQADASDAGAMGAVRDAVKARYGAIHGVVHSALALRDATLATMTEADFRRVLAAKLDTSVRLAEAFADEPLDFMLFFSSFAAFSFPQGQANYAAGCAFQDAFAQHLAARAPFAVKTVNWGFWGHAGVVATPAHRDRMARLGIGSIEPDAAMRSLECLLACDVGQLALINVRRDDAIAPLMTPRRVALHAPGAGPRALDSVARVRPDAERTAAARLHGGLQRDEWRDVLLSLLDATFDALGARRAAEAGGDALRAALGIAPRHARWFAASLDWLRALREGAHAAAAMSADDAWRAWARLGAACDGDAGRSAQYALVDATLRHLADIVTGRRKATEIMFPKGSMALVENVYRHHPVADYFNLAVAEIVAARAADVVRERGVRILEVGAGTGGTTARVLAVLRERGVRVDDYRFTDVSPGFLDHAAARFGAGAPFMSYGLFDVMRAPAAQGIAPHGFDIVVATNVLHATADVRASLRHCRDALRAGGLLVVNEISDKSLFTHLTFGLLDGWWAYEDAALRIDGSPALDAHHWAFALRSEGYADVAFPWADAHDLGQQIVLADAGDVVDAADAQAMRAREAEPWAWATGAESESVLEAVSETETALTPAPTQSPAAPSDATRTAALLRSLLGEALKVEPVSIEGDGAFGDYGLDSIIGMGFVDAINRALDLSLDVTAVFEHNTVDALAAYVGSQLAARAPAAAGARDVEPASSLASSSASDFVSARLPAVDAAASSAFDAAPRARTGADAPDTSLASSASSISSARASSPASPARDAASFDVAIVGASCRFPGADGLDALWRCIVDERSCVRDVGAKWLRTRDPADAGADYRAAVLDGIDRFDAARFGISPREARRMDPQQRLLLTEAWRALQDAGDAARAAAHRTGVFVAAGANEYGAGLDAADNPFSMTSMAPALMPNRISYALDLRGPSEMTDTACSSSLVALHRAVRSLRDGECDQAVVAAVNLLLSAEKFEGFAELGFLSPSGRTRSFDAAGDGFVRGEGAAALVLKPLAAARRDGDFVYACIKGTAVHHGGRGAALTAPNAAGIREAMSAAYRNAGIDARTVSYLEAHGVGSPVGDAIELNAIRDAYAALSGEPAPAAPAASCRIGSVKPVFGHVELASGLLAVCKVLMALRHGVLPGVPGFERPNPHANLAGSPLVVARAAAPWPAPRDDANGAAVPRRASVNSFGFGGVNAHVVLEEDVSSRHAPRVFAQPPLDGARHWECPREIAGAPAARPGRPAPDAPHARIEAVIRDALAQALGVAPDAFELAVPLGEYGADSMLDLHLATRIEETLGVQLSVRELFAHRTLGALRDHVAERIARDGGRRAAEAARAPDAAMASDVAEASVVSEATEASDASEASDASEASEASEASEASKAPADLAALLERFRAGQMDLDDIVDLV.

Residues 13 to 448 enclose the Ketosynthase family 3 (KS3) 1 domain; it reads HDDIAVIGIA…GTNAHVVLRE (436 aa). Residues cysteine 184, histidine 319, and histidine 361 each act as for beta-ketoacyl synthase 1 activity in the active site. Disordered stretches follow at residues 552 to 613 and 1156 to 1183; these read GNLV…DGPT and ASPGAASSGAAAPNAASDASRDTERAEA. Residues 559–589 show a composition bias toward basic and acidic residues; the sequence is GPHDEQADHDGSGEHGEHGERARAGADDLSR. Positions 1156–1173 are enriched in low complexity; it reads ASPGAASSGAAAPNAASD. A compositionally biased stretch (basic and acidic residues) spans 1174–1183; it reads ASRDTERAEA. The Carrier 1 domain maps to 1209-1286; the sequence is AHGSARLPAL…RLAGHLATRL (78 aa). Serine 1246 carries the post-translational modification O-(pantetheine 4'-phosphoryl)serine. A Ketosynthase family 3 (KS3) 2 domain is found at 1373 to 1781; it reads YEPIAIVGMS…GTNAHVIVEA (409 aa). Active-site for beta-ketoacyl synthase 2 activity residues include cysteine 1529, histidine 1664, and histidine 1704. Residues 1967-2099 are N-terminal hotdog fold 1; the sequence is AREPGARERA…GVVDELNEPA (133 aa). The region spanning 1967-2261 is the PKS/mFAS DH 1 domain; the sequence is AREPGARERA…SARWRKLAGA (295 aa). The active-site Proton acceptor; for dehydratase activity 1 is histidine 1999. The interval 2113–2261 is C-terminal hotdog fold 1; it reads AGERVDGAAL…SARWRKLAGA (149 aa). Aspartate 2175 acts as the Proton donor; for dehydratase activity 1 in catalysis. A disordered region spans residues 2426–2446; the sequence is DADEDDRDGREPAGGPPLRDD. The Carrier 2 domain occupies 2702-2780; sequence PAARVDLHAL…AIARALDASA (79 aa). The segment at 2817 to 2836 is disordered; the sequence is TPPDAGAPQRGAHAAAAEGS. Positions 2822 to 2835 are enriched in low complexity; the sequence is GAPQRGAHAAAAEG. The Carrier 3 domain occupies 2862–2935; sequence ARVGARLSAL…ELTDYFVRRH (74 aa). O-(pantetheine 4'-phosphoryl)serine is present on serine 2896. Positions 3005 to 3430 constitute a Ketosynthase family 3 (KS3) 3 domain; that stretch reads ADAIAVIGLA…GANAHVIVRE (426 aa). Catalysis depends on for beta-ketoacyl synthase 3 activity residues cysteine 3175, histidine 3310, and histidine 3351. The tract at residues 3526–3546 is disordered; the sequence is PGKKQLRGNGRARRGDAPPAG. Positions 3621 to 3743 are N-terminal hotdog fold 2; sequence HPMLDANRSE…GRSPSRAARG (123 aa). The region spanning 3621–3895 is the PKS/mFAS DH 2 domain; it reads HPMLDANRSE…SRAAASWRTA (275 aa). Histidine 3650 functions as the Proton acceptor; for dehydratase activity 2 in the catalytic mechanism. Residues 3758-3895 are C-terminal hotdog fold 2; sequence RAAPAFDADA…SRAAASWRTA (138 aa). The active-site Proton donor; for dehydratase activity 2 is aspartate 3818. The tract at residues 3917 to 3942 is disordered; sequence PAAESPSAATSTSAATSPAISTSAAT. The Carrier 4 domain maps to 4840-4914; sequence TRTAALLRSL…ALAAYVGSQL (75 aa). Serine 4874 carries the post-translational modification O-(pantetheine 4'-phosphoryl)serine. Residues 4960-4992 are disordered; that stretch reads APRARTGADAPDTSLASSASSISSARASSPASP. Residues 4998–5424 form the Ketosynthase family 3 (KS3) 4 domain; sequence SFDVAIVGAS…GVNAHVVLEE (427 aa). Residues cysteine 5158, histidine 5293, and histidine 5339 each act as for beta-ketoacyl synthase 4 activity in the active site. One can recognise a Carrier 5 domain in the interval 5470–5544; sequence ARIEAVIRDA…ALRDHVAERI (75 aa). O-(pantetheine 4'-phosphoryl)serine is present on serine 5504. Residues 5573-5603 form a disordered region; that stretch reads VSEATEASDASEASDASEASEASEASEASKA.

It depends on pantetheine 4'-phosphate as a cofactor.

It localises to the cytoplasm. The protein operates within antibiotic biosynthesis. Involved in production of the polyketide antibiotic thailandamide. In Burkholderia thailandensis (strain ATCC 700388 / DSM 13276 / CCUG 48851 / CIP 106301 / E264), this protein is Polyketide synthase ThaG.